We begin with the raw amino-acid sequence, 950 residues long: MSDNPFNASLLDEDSNREREILDATAEALSKPSPSLEYCTLSVDEALEKLDTDKNGGLRSSNEANNRRSLYGPNEITVEDDESLFKKFLSNFIEDRMILLLIGSAVVSLFMGNIDDAVSITLAIFIVVTVGFVQEYRSEKSLEALNKLVPAECHLMRCGQESHVLASTLVPGDLVHFRIGDRIPADIRIIEAIDLSIDESNLTGENEPVHKTSQTIEKSSFNDQPNSIVPISERSCIAYMGTLVKEGHGKGIVVGTGTNTSFGAVFEMMNNIEKPKTPLQLTMDKLGKDLSLVSFIVIGMICLVGIIQGRSWLEMFQISVSLAVAAIPEGLPIIVTVTLALGVLRMAKRKAIVRRLPSVETLGSVNVICSDKTGTLTSNHMTVSKLWCLDSMSNKLNVLSLDKNKKTKNSNGNLKNYLTEDVRETLTIGNLCNNASFSQEHAIFLGNPTDVALLEQLANFEMPDIRNTVQKVQELPFNSKRKLMATKILNPVDNKCTVYVKGAFERILEYSTSYLKSKGKKTEKLTEAQKATINECANSMASEGLRVFGFAKLTLSDSSTPLTEDLIKDLTFTGLIGMNDPPRPNVKFAIEQLLQGGVHIIMITGDSENTAVNIAKQIGIPVIDPKLSVLSGDKLDEMSDDQLANVIDHVNIFARATPEHKLNIVRALRKRGDVVAMTGDGVNDAPALKLSDIGVSMGRIGTDVAKEASDMVLTDDDFSTILTAIEEGKGIFNNIQNFLTFQLSTSVAALSLVALSTAFKLPNPLNAMQILWINILMDGPPAQSLGVEPVDHEVMKKPPRKRTDKILTHDVMKRLLTTAACIIVGTVYIFVKEMAEDGKVTARDTTMTFTCFVFFDMFNALACRHNTKSIFEIGFFTNKMFNYAVGLSLLGQMCAIYIPFFQSIFKTEKLGISDILLLLLISSSVFIVDELRKLWTRKKNEEDSTYFSNV.

Serine 2 bears the N-acetylserine mark. Residues 2 to 92 (SDNPFNASLL…SLFKKFLSNF (91 aa)) lie on the Cytoplasmic side of the membrane. The helical transmembrane segment at 93–111 (IEDRMILLLIGSAVVSLFM) threads the bilayer. Residues 112 to 116 (GNIDD) lie on the Lumenal side of the membrane. A helical membrane pass occupies residues 117–133 (AVSITLAIFIVVTVGFV). The Cytoplasmic segment spans residues 134 to 288 (QEYRSEKSLE…LQLTMDKLGK (155 aa)). Serine 227 is modified (phosphoserine). Residues 289 to 309 (DLSLVSFIVIGMICLVGIIQG) traverse the membrane as a helical segment. At 310 to 323 (RSWLEMFQISVSLA) the chain is on the lumenal side. Residues 324 to 344 (VAAIPEGLPIIVTVTLALGVL) traverse the membrane as a helical segment. At 345–814 (RMAKRKAIVR…KILTHDVMKR (470 aa)) the chain is on the cytoplasmic side. Catalysis depends on aspartate 371, which acts as the 4-aspartylphosphate intermediate. Residues 815–835 (LLTTAACIIVGTVYIFVKEMA) form a helical membrane-spanning segment. The Lumenal portion of the chain corresponds to 836 to 844 (EDGKVTARD). Residues 845–862 (TTMTFTCFVFFDMFNALA) traverse the membrane as a helical segment. At 863 to 884 (CRHNTKSIFEIGFFTNKMFNYA) the chain is on the cytoplasmic side. The chain crosses the membrane as a helical span at residues 885–905 (VGLSLLGQMCAIYIPFFQSIF). Over 906–909 (KTEK) the chain is Lumenal. A helical transmembrane segment spans residues 910-930 (LGISDILLLLLISSSVFIVDE). At 931–950 (LRKLWTRKKNEEDSTYFSNV) the chain is on the cytoplasmic side.

Belongs to the cation transport ATPase (P-type) (TC 3.A.3) family.

The protein localises to the golgi apparatus membrane. The catalysed reaction is Ca(2+)(in) + ATP + H2O = Ca(2+)(out) + ADP + phosphate + H(+). This magnesium-dependent enzyme catalyzes the hydrolysis of ATP coupled with the transport of calcium. Has a role in the secretory pathway. In Saccharomyces cerevisiae (strain ATCC 204508 / S288c) (Baker's yeast), this protein is Calcium-transporting ATPase 1 (PMR1).